The primary structure comprises 155 residues: Vasotocin-neurophysin VT 2 (155 aa).

The signal sequence occupies residues 1-20 (MSVCAVLLLCVAGLLCLSSA). Residues C21 and C26 are joined by a disulfide bond. The residue at position 29 (G29) is a Glycine amide. Cystine bridges form between C42/C86, C45/C59, C53/C76, C60/C66, C93/C106, C100/C118, and C107/C112. Residues 119–128 (SEDSESEEPA) are compositionally biased toward acidic residues. The segment at 119-139 (SEDSESEEPADQNTLGASPGE) is disordered.

The protein belongs to the vasopressin/oxytocin family.

The protein resides in the secreted. Its function is as follows. Vasotocin is an antidiuretic hormone. The chain is Vasotocin-neurophysin VT 2 from Catostomus commersonii (White sucker).